Consider the following 163-residue polypeptide: Small heat shock protein C1 (163 aa).

The sHSP domain occupies 55 to 163; it reads TFYESSSLKS…EQDSREITIN (109 aa).

The protein belongs to the small heat shock protein (HSP20) family.

This chain is Small heat shock protein C1 (hspC1), found in Rickettsia prowazekii (strain Madrid E).